The following is a 434-amino-acid chain: T-box transcription factor T homolog (434 aa).

The segment at residues 50–220 (LWKKFHKLTN…YNPFAKAFLD (171 aa)) is a DNA-binding region (T-box). Polar residues-rich tracts occupy residues 355-364 (SGFSHVSSPQ) and 376-385 (HPTSSHQHNL). Residues 355–385 (SGFSHVSSPQSPLPTGLFRNPHPTSSHQHNL) are disordered.

As to expression, in the developing embryo, expressed in the mesenchyme founder cells, vegetal plate of the mesenchyme blastula, extending tip of the invaginating archenteron and, later, in the secondary mesenchyme cells.

The protein localises to the nucleus. Involved in the transcriptional regulation of genes required for mesoderm differentiation. The chain is T-box transcription factor T homolog from Hemicentrotus pulcherrimus (Sea urchin).